A 519-amino-acid polypeptide reads, in one-letter code: Glucose-1-phosphate adenylyltransferase large subunit 3, chloroplastic/amyloplastic (519 aa).

The transit peptide at 1 to 74 directs the protein to the chloroplast; the sequence is MQFSSVFPLE…DAGPDTLHVR (74 aa).

This sequence belongs to the bacterial/plant glucose-1-phosphate adenylyltransferase family. In terms of assembly, heterotetramer composed of two small and two large subunits. Expressed in stems.

It localises to the plastid. Its subcellular location is the chloroplast. The enzyme catalyses alpha-D-glucose 1-phosphate + ATP + H(+) = ADP-alpha-D-glucose + diphosphate. It functions in the pathway glycan biosynthesis; starch biosynthesis. With respect to regulation, activated by 3'phosphoglycerate, inhibited by orthophosphate. Allosteric regulation. In terms of biological role, involved in synthesis of starch. Catalyzes the synthesis of ADP-glucose, a molecule that serves as an activated glycosyl donor for alpha-1,4-glucan synthesis. Essential for starch synthesis in leaf chloroplasts. This Oryza sativa subsp. japonica (Rice) protein is Glucose-1-phosphate adenylyltransferase large subunit 3, chloroplastic/amyloplastic.